Consider the following 155-residue polypeptide: Large ribosomal subunit protein uL22c (155 aa).

It belongs to the universal ribosomal protein uL22 family. In terms of assembly, part of the 50S ribosomal subunit.

The protein localises to the plastid. Its subcellular location is the chloroplast. Functionally, this protein binds specifically to 23S rRNA. Its function is as follows. The globular domain of the protein is located near the polypeptide exit tunnel on the outside of the subunit, while an extended beta-hairpin is found that lines the wall of the exit tunnel in the center of the 70S ribosome. The polypeptide is Large ribosomal subunit protein uL22c (rpl22) (Nicotiana sylvestris (Wood tobacco)).